Reading from the N-terminus, the 1510-residue chain is Chromosome partition protein MukB (1510 aa).

A coiled-coil region spans residues 6–30 (ELENEIELESDEVIMENENVEEIVD). 75–82 (GGNGAGKS) provides a ligand contact to ATP. Coiled-coil stretches lie at residues 346–506 (QHRL…HKMS), 553–611 (QQTP…EDIS), 673–706 (MQSQ…RLSQ), 821–846 (SAAR…AQIA), 876–1064 (EALM…IQLQ), 1094–1149 (ERAR…RELV), and 1249–1304 (DAIE…LQNI). Residues 707–824 (PDGSEDPRLN…EIPLFGSAAR (118 aa)) are flexible hinge.

Belongs to the SMC family. MukB subfamily. Homodimerization via its hinge domain. Binds to DNA via its C-terminal region. Interacts, and probably forms a ternary complex, with MukE and MukF via its C-terminal region. The complex formation is stimulated by calcium or magnesium. Interacts with tubulin-related protein FtsZ.

It localises to the cytoplasm. The protein resides in the nucleoid. Its function is as follows. Plays a central role in chromosome condensation, segregation and cell cycle progression. Functions as a homodimer, which is essential for chromosome partition. Involved in negative DNA supercoiling in vivo, and by this means organize and compact chromosomes. May achieve or facilitate chromosome segregation by condensation DNA from both sides of a centrally located replisome during cell division. The chain is Chromosome partition protein MukB from Haemophilus influenzae (strain PittGG).